The following is a 272-amino-acid chain: Acidic leucine-rich nuclear phosphoprotein 32-related protein 2 (272 aa).

LRR repeat units lie at residues 57 to 78, 79 to 100, and 106 to 127; these read SLEELSVAGARLSSLAGLPRLP, ALRRLSLPDNRLSGAASLAAVA, and TLRHLDLGNNRFADVAELAPLA. The LRRCT domain maps to 139–184; it reads CPVTKAKGYRDKVFALIPSLKFLDGMDAEGNDCLDSDDEEDEEEDE. The segment at 163 to 272 is disordered; it reads GMDAEGNDCL…DSEDDANGDN (110 aa). A compositionally biased stretch (acidic residues) spans 164–241; sequence MDAEGNDCLD…DEAGADEEDE (78 aa). Residues 248 to 257 show a composition bias toward polar residues; sequence SKGSSGSAQP.

This sequence belongs to the ANP32 family.

This chain is Acidic leucine-rich nuclear phosphoprotein 32-related protein 2, found in Oryza sativa subsp. japonica (Rice).